A 304-amino-acid polypeptide reads, in one-letter code: UDP-3-O-acyl-N-acetylglucosamine deacetylase (304 aa).

Zn(2+) contacts are provided by His-78, His-237, and Asp-241. The active-site Proton donor is His-264.

Belongs to the LpxC family. It depends on Zn(2+) as a cofactor.

The enzyme catalyses a UDP-3-O-[(3R)-3-hydroxyacyl]-N-acetyl-alpha-D-glucosamine + H2O = a UDP-3-O-[(3R)-3-hydroxyacyl]-alpha-D-glucosamine + acetate. It functions in the pathway glycolipid biosynthesis; lipid IV(A) biosynthesis; lipid IV(A) from (3R)-3-hydroxytetradecanoyl-[acyl-carrier-protein] and UDP-N-acetyl-alpha-D-glucosamine: step 2/6. In terms of biological role, catalyzes the hydrolysis of UDP-3-O-myristoyl-N-acetylglucosamine to form UDP-3-O-myristoylglucosamine and acetate, the committed step in lipid A biosynthesis. This chain is UDP-3-O-acyl-N-acetylglucosamine deacetylase, found in Acidithiobacillus ferrooxidans (strain ATCC 53993 / BNL-5-31) (Leptospirillum ferrooxidans (ATCC 53993)).